The sequence spans 457 residues: Vasoactive intestinal polypeptide receptor (457 aa).

A signal peptide spans 1–19 (MGLVEVVWWWRWRFGGGGG). The Extracellular segment spans residues 20–141 (GLVVEVEVWW…KEQTAFYGTV (122 aa)). 3 disulfides stabilise this stretch: C51/C73, C64/C105, and C87/C122. N59, N70, N100, and N104 each carry an N-linked (GlcNAc...) asparagine glycan. The chain crosses the membrane as a helical span at residues 142–166 (KTGYTIGHTLSLIALTAAMIILCLF). The Cytoplasmic segment spans residues 167-173 (RKLHCTR). Residues 174-193 (NYIHMHLFMSFIMRAIAVFI) form a helical membrane-spanning segment. Residues 194 to 215 (KDVTLFESGEPEHCFVSSVGCK) lie on the Extracellular side of the membrane. C214 and C284 form a disulfide bridge. Residues 216-239 (AMMVFFQYCVMANFFWLLVEGLYL) traverse the membrane as a helical segment. Topologically, residues 240–253 (HTLLVISFFSERKY) are cytoplasmic. Residues 254-275 (FWWYILIGWGAPSVFITAWTVV) form a helical membrane-spanning segment. Topologically, residues 276–292 (RIYFFNVGCWEEIIESP) are extracellular. A helical membrane pass occupies residues 293–316 (IWWIIKTPILVSILVNFILFICII). Topologically, residues 317–341 (RILVQKLHSPDVGHNETSQYSRLAK) are cytoplasmic. A helical transmembrane segment spans residues 342 to 361 (STLLLIPLFGIHYIMFAFFP). At 362 to 373 (DNFKAQVKLVFE) the chain is on the extracellular side. A helical membrane pass occupies residues 374-393 (LVVGSFQGFVVAVLYCFLNG). The Cytoplasmic portion of the chain corresponds to 394 to 457 (EVQAELKRKW…SSFQAEFSLV (64 aa)).

Belongs to the G-protein coupled receptor 2 family. In terms of tissue distribution, expressed in pituitary, hypothalamus, small intestine and ovarian follicles.

It localises to the cell membrane. Functionally, this is a receptor for VIP. The activity of this receptor is mediated by G proteins which activate adenylyl cyclase. The protein is Vasoactive intestinal polypeptide receptor (VIPR1) of Meleagris gallopavo (Wild turkey).